Here is a 389-residue protein sequence, read N- to C-terminus: Succinyl-diaminopimelate desuccinylase (389 aa).

Histidine 72 contributes to the Zn(2+) binding site. The active site involves aspartate 74. Position 105 (aspartate 105) interacts with Zn(2+). Catalysis depends on glutamate 144, which acts as the Proton acceptor. Glutamate 145, glutamate 173, and histidine 362 together coordinate Zn(2+).

This sequence belongs to the peptidase M20A family. DapE subfamily. In terms of assembly, homodimer. The cofactor is Zn(2+). Co(2+) is required as a cofactor.

The enzyme catalyses N-succinyl-(2S,6S)-2,6-diaminopimelate + H2O = (2S,6S)-2,6-diaminopimelate + succinate. It participates in amino-acid biosynthesis; L-lysine biosynthesis via DAP pathway; LL-2,6-diaminopimelate from (S)-tetrahydrodipicolinate (succinylase route): step 3/3. In terms of biological role, catalyzes the hydrolysis of N-succinyl-L,L-diaminopimelic acid (SDAP), forming succinate and LL-2,6-diaminopimelate (DAP), an intermediate involved in the bacterial biosynthesis of lysine and meso-diaminopimelic acid, an essential component of bacterial cell walls. The chain is Succinyl-diaminopimelate desuccinylase from Nitrobacter hamburgensis (strain DSM 10229 / NCIMB 13809 / X14).